The chain runs to 399 residues: Subtilisin-like protease CPC735_033790 (399 aa).

The signal sequence occupies residues 1–20 (MGFLSSAILLLITAFPAAQA). A propeptide spanning residues 21–117 (GEMINAAAGA…VEPDRMVNIT (97 aa)) is cleaved from the precursor. Residues 37–116 (SYIVVMNEGI…YVEPDRMVNI (80 aa)) form the Inhibitor I9 domain. A glycan (N-linked (GlcNAc...) asparagine) is linked at N115. The Peptidase S8 domain occupies 127 to 399 (SYGLGRISNK…NRLLYNNSGV (273 aa)). Catalysis depends on charge relay system residues D159 and H190. N-linked (GlcNAc...) asparagine glycosylation occurs at N251. The Charge relay system role is filled by S345. N-linked (GlcNAc...) asparagine glycosylation occurs at N395.

This sequence belongs to the peptidase S8 family.

Its subcellular location is the secreted. In terms of biological role, secreted subtilisin-like serine protease with keratinolytic activity that contributes to pathogenicity. The sequence is that of Subtilisin-like protease CPC735_033790 from Coccidioides posadasii (strain C735) (Valley fever fungus).